The sequence spans 194 residues: Cysteine and glycine-rich protein 2 (194 aa).

The 52-residue stretch at 10–61 folds into the LIM zinc-binding 1 domain; it reads CGACGRTVYHAEEVQCDGRSFHRCCFLCMVCRKNLDSTTVAIHDAEVYCKSC. Positions 64–69 match the Nuclear localization signal motif; that stretch reads KKYGPK. Residues 120-171 enclose the LIM zinc-binding 2 domain; it reads CSRCGDSVYAAEKVIGAGKPWHKNCFRCAKCGKSLESTTLTEKEGEIYCKGC.

It localises to the nucleus. Totally down-regulated in transformed cells. May therefore take part in the control of cell growth and differentiation. The polypeptide is Cysteine and glycine-rich protein 2 (CSRP2) (Gallus gallus (Chicken)).